Consider the following 392-residue polypeptide: Bifunctional enzyme IspD/IspF (392 aa).

2-C-methyl-D-erythritol 4-phosphate cytidylyltransferase regions lie at residues 1 to 234 and 1 to 235; these read MTES…MMRT and MTES…MRTA. A 2-C-methyl-D-erythritol 2,4-cyclodiphosphate synthase region spans residues 235-392; sequence AVGMGYDVHR…AVATIQLPET (158 aa). A divalent metal cation-binding residues include aspartate 241 and histidine 243. Residues 241–243 and 267–268 each bind 4-CDP-2-C-methyl-D-erythritol 2-phosphate; these read DVH and HS. Histidine 275 lines the a divalent metal cation pocket. 4-CDP-2-C-methyl-D-erythritol 2-phosphate-binding positions include 289-291, 365-368, phenylalanine 372, and arginine 375; these read DIG and TTTE.

The protein in the N-terminal section; belongs to the IspD/TarI cytidylyltransferase family. IspD subfamily. In the C-terminal section; belongs to the IspF family. A divalent metal cation serves as cofactor.

It catalyses the reaction 2-C-methyl-D-erythritol 4-phosphate + CTP + H(+) = 4-CDP-2-C-methyl-D-erythritol + diphosphate. The enzyme catalyses 4-CDP-2-C-methyl-D-erythritol 2-phosphate = 2-C-methyl-D-erythritol 2,4-cyclic diphosphate + CMP. It participates in isoprenoid biosynthesis; isopentenyl diphosphate biosynthesis via DXP pathway; isopentenyl diphosphate from 1-deoxy-D-xylulose 5-phosphate: step 2/6. Its pathway is isoprenoid biosynthesis; isopentenyl diphosphate biosynthesis via DXP pathway; isopentenyl diphosphate from 1-deoxy-D-xylulose 5-phosphate: step 4/6. Its function is as follows. Bifunctional enzyme that catalyzes the formation of 4-diphosphocytidyl-2-C-methyl-D-erythritol from CTP and 2-C-methyl-D-erythritol 4-phosphate (MEP) (IspD), and catalyzes the conversion of 4-diphosphocytidyl-2-C-methyl-D-erythritol 2-phosphate (CDP-ME2P) to 2-C-methyl-D-erythritol 2,4-cyclodiphosphate (ME-CPP) with a corresponding release of cytidine 5-monophosphate (CMP) (IspF). This is Bifunctional enzyme IspD/IspF from Sphingopyxis alaskensis (strain DSM 13593 / LMG 18877 / RB2256) (Sphingomonas alaskensis).